Reading from the N-terminus, the 246-residue chain is Probable transcriptional regulatory protein WRi_002620 (246 aa).

The tract at residues 1-22 is disordered; that stretch reads MAGHSQFSNIKHRKGAQDAKRS.

It belongs to the TACO1 family.

The protein localises to the cytoplasm. This Wolbachia sp. subsp. Drosophila simulans (strain wRi) protein is Probable transcriptional regulatory protein WRi_002620.